A 238-amino-acid polypeptide reads, in one-letter code: Probable transcriptional regulatory protein VV2_1184 (238 aa).

Belongs to the TACO1 family.

Its subcellular location is the cytoplasm. This Vibrio vulnificus (strain CMCP6) protein is Probable transcriptional regulatory protein VV2_1184.